Reading from the N-terminus, the 444-residue chain is Probable D-serine dehydratase (444 aa).

Lys118 is modified (N6-(pyridoxal phosphate)lysine).

The protein belongs to the serine/threonine dehydratase family. DsdA subfamily. Pyridoxal 5'-phosphate serves as cofactor.

The enzyme catalyses D-serine = pyruvate + NH4(+). This is Probable D-serine dehydratase from Acinetobacter baumannii (strain ACICU).